The chain runs to 258 residues: Synapse differentiation-inducing gene protein 1-like (258 aa).

At 1 to 182 (MESLSELQNP…FIVIPPRDHL (182 aa)) the chain is on the extracellular side. A helical transmembrane segment spans residues 183-203 (GLAIFSMLCCFWPLGIAAFYF). Residues 204–228 (SQGTSKAVTKGDFPLASIASRRALF) lie on the Cytoplasmic side of the membrane. The chain crosses the membrane as a helical span at residues 229 to 249 (LAALSITIGTGVYVGVVVALI). Over 250–258 (AYLSKPGHI) the chain is Extracellular.

The protein belongs to the CD225/Dispanin family.

Its subcellular location is the membrane. It localises to the golgi apparatus. The protein resides in the cis-Golgi network. This Danio rerio (Zebrafish) protein is Synapse differentiation-inducing gene protein 1-like (syndig1l).